We begin with the raw amino-acid sequence, 133 residues long: ATP synthase epsilon chain, chloroplastic (133 aa).

It belongs to the ATPase epsilon chain family. F-type ATPases have 2 components, CF(1) - the catalytic core - and CF(0) - the membrane proton channel. CF(1) has five subunits: alpha(3), beta(3), gamma(1), delta(1), epsilon(1). CF(0) has three main subunits: a, b and c.

It is found in the plastid. It localises to the chloroplast thylakoid membrane. Produces ATP from ADP in the presence of a proton gradient across the membrane. This Lotus japonicus (Lotus corniculatus var. japonicus) protein is ATP synthase epsilon chain, chloroplastic.